Consider the following 346-residue polypeptide: Putative D-alanine--D-lactate ligase (346 aa).

An ATP-grasp domain is found at Tyr137–Ser338. Arg163–Gly216 contacts ATP. The Mg(2+) site is built by Asp292, Glu305, and Asn307.

The protein belongs to the D-alanine--D-alanine ligase family. Mg(2+) is required as a cofactor. It depends on Mn(2+) as a cofactor.

The protein resides in the cell membrane. Its function is as follows. Required for resistance to glycopeptides antibiotics. D-Ala--D-Ala ligase of altered specificity which catalyzes ester bond formation between D-Ala and various D-hydroxy acids; producing a peptidoglycan which does not terminate by D-alanine but by D-lactate, thus preventing vancomycin binding. This chain is Putative D-alanine--D-lactate ligase, found in Streptomyces coelicolor (strain ATCC BAA-471 / A3(2) / M145).